A 57-amino-acid chain; its full sequence is UPF0391 membrane protein BRADO2787 (57 aa).

A run of 2 helical transmembrane segments spans residues 6–26 and 35–55; these read WALL…TGVS and ILFY…LTIF.

Belongs to the UPF0391 family.

Its subcellular location is the cell membrane. This Bradyrhizobium sp. (strain ORS 278) protein is UPF0391 membrane protein BRADO2787.